Consider the following 257-residue polypeptide: Cyclin-C1-1 (257 aa).

This sequence belongs to the cyclin family. Cyclin C subfamily.

This chain is Cyclin-C1-1, found in Oryza sativa subsp. japonica (Rice).